We begin with the raw amino-acid sequence, 346 residues long: Acetylpolyamine amidohydrolase 1 (346 aa).

His161 functions as the Proton donor/acceptor in the catalytic mechanism. The Zn(2+) site is built by Asp197, His199, and Asp286.

The protein belongs to the histone deacetylase family. As to quaternary structure, homodimer. The cofactor is Zn(2+).

It carries out the reaction N-acetylputrescine + H2O = putrescine + acetate. It catalyses the reaction N-acetylcadaverine + H2O = cadaverine + acetate. The catalysed reaction is N(1)-acetylspermine + H2O = spermine + acetate. The enzyme catalyses N(1)-acetylspermidine + H2O = spermidine + acetate. It functions in the pathway amine and polyamine metabolism. Functionally, catalyzes the deacetylation of acetylated polyamines such as N-acetylputrescine, N-acetylcadaverine, N(1)-acetylspermine and N(1)-acetylspermidine. Plays an important role in the metabolism of acetylated polyamines in P.aeruginosa. Is involved in the degradation pathways of N-acetylputrescine and N-acetylcadaverine, that allow P.aeruginosa to utilize these acetylpolyamines as a carbon source under glucose starvation. In vitro, can also hydrolyze artificial trifluoroacetylated and acetylated lysine-derivatives. This Pseudomonas aeruginosa (strain ATCC 15692 / DSM 22644 / CIP 104116 / JCM 14847 / LMG 12228 / 1C / PRS 101 / PAO1) protein is Acetylpolyamine amidohydrolase 1.